The following is a 549-amino-acid chain: Chaperonin GroEL (549 aa).

ATP-binding positions include Thr29–Pro32, Lys50, Asp86–Thr90, Gly418, and Asp499.

This sequence belongs to the chaperonin (HSP60) family. Forms a cylinder of 14 subunits composed of two heptameric rings stacked back-to-back. Interacts with the co-chaperonin GroES.

Its subcellular location is the cytoplasm. It carries out the reaction ATP + H2O + a folded polypeptide = ADP + phosphate + an unfolded polypeptide.. Together with its co-chaperonin GroES, plays an essential role in assisting protein folding. The GroEL-GroES system forms a nano-cage that allows encapsulation of the non-native substrate proteins and provides a physical environment optimized to promote and accelerate protein folding. The polypeptide is Chaperonin GroEL (Wolbachia sp. subsp. Drosophila simulans (strain wRi)).